Here is a 468-residue protein sequence, read N- to C-terminus: Uronate isomerase (468 aa).

Belongs to the metallo-dependent hydrolases superfamily. Uronate isomerase family.

The catalysed reaction is D-glucuronate = D-fructuronate. The enzyme catalyses aldehydo-D-galacturonate = keto-D-tagaturonate. It participates in carbohydrate metabolism; pentose and glucuronate interconversion. This Marinomonas sp. (strain MWYL1) protein is Uronate isomerase.